The sequence spans 244 residues: Transcriptional activator protein CarR (244 aa).

Residues 162-227 (DNSRNALLSP…HAITKALELN (66 aa)) enclose the HTH luxR-type domain. A DNA-binding region (H-T-H motif) is located at residues 186–205 (YKEVSRILGISEVTVKFHIN).

It belongs to the autoinducer-regulated transcriptional regulatory protein family.

Functions as an OHLL responsive transcriptional regulator which acts in the control of the biosynthesis of carbapenem antibiotics. The polypeptide is Transcriptional activator protein CarR (carR) (Pectobacterium carotovorum subsp. carotovorum (Erwinia carotovora subsp. carotovora)).